Reading from the N-terminus, the 573-residue chain is Oxygen sensor histidine kinase response regulator DosT (573 aa).

2 GAF domains span residues 61-198 and 229-366; these read KLDA…GIAV and DPAM…ALAW. His-147 is a binding site for heme. Positions 380 to 573 constitute a Histidine kinase domain; the sequence is ILTDRDRIAR…TLLRWSAPLR (194 aa). His-392 carries the post-translational modification Phosphohistidine; by autocatalysis.

It depends on Mg(2+) as a cofactor. Requires heme as cofactor.

The protein localises to the cytoplasm. Functionally, interacts with the two-component regulatory system DevR/DevS (DosR/DosS) involved in onset of the dormancy response. Required for full induction of the DevR (DosR) regulon; required during early adaptation to anaerobiosis, to start induction of the DevR regulon. May act as a direct hypoxia/oxygen sensor. May be the secondary sensor for CO. Donates a phosphate group to DevR (DosR). This Mycobacterium tuberculosis (strain CDC 1551 / Oshkosh) protein is Oxygen sensor histidine kinase response regulator DosT (dosT).